The sequence spans 260 residues: DNA repair protein RecO (260 aa).

Belongs to the RecO family.

Its function is as follows. Involved in DNA repair and RecF pathway recombination. This chain is DNA repair protein RecO, found in Streptococcus suis (strain 98HAH33).